Consider the following 96-residue polypeptide: Large ribosomal subunit protein uL23 (96 aa).

The protein belongs to the universal ribosomal protein uL23 family. Part of the 50S ribosomal subunit. Contacts protein L29, and trigger factor when it is bound to the ribosome.

In terms of biological role, one of the early assembly proteins it binds 23S rRNA. One of the proteins that surrounds the polypeptide exit tunnel on the outside of the ribosome. Forms the main docking site for trigger factor binding to the ribosome. The sequence is that of Large ribosomal subunit protein uL23 from Alkaliphilus oremlandii (strain OhILAs) (Clostridium oremlandii (strain OhILAs)).